The following is a 144-amino-acid chain: Large ribosomal subunit protein uL14 (144 aa).

Belongs to the universal ribosomal protein uL14 family. Part of the 50S ribosomal subunit. Forms a cluster with proteins L3 and L24e, part of which may contact the 16S rRNA in 2 intersubunit bridges.

Binds to 23S rRNA. Forms part of two intersubunit bridges in the 70S ribosome. This chain is Large ribosomal subunit protein uL14, found in Cenarchaeum symbiosum (strain A).